The sequence spans 316 residues: tRNA dimethylallyltransferase (316 aa).

17–24 (GPTASGKT) is a binding site for ATP. 19 to 24 (TASGKT) serves as a coordination point for substrate. 3 interaction with substrate tRNA regions span residues 42-45 (DSAL), 166-170 (QRLSR), and 247-252 (RCVGYR).

Belongs to the IPP transferase family. Monomer. Mg(2+) serves as cofactor.

The catalysed reaction is adenosine(37) in tRNA + dimethylallyl diphosphate = N(6)-dimethylallyladenosine(37) in tRNA + diphosphate. Functionally, catalyzes the transfer of a dimethylallyl group onto the adenine at position 37 in tRNAs that read codons beginning with uridine, leading to the formation of N6-(dimethylallyl)adenosine (i(6)A). The sequence is that of tRNA dimethylallyltransferase from Klebsiella pneumoniae (strain 342).